Reading from the N-terminus, the 422-residue chain is Phosphoribosylamine--glycine ligase (422 aa).

The ATP-grasp domain maps to 107–312 (KEVMAAAGVR…LGQLLYAAGT (206 aa)). 138–193 (PPVGDLSWVVKDDRLAAGKGVVVTSDRDVARTHAAGLLEAGHPVLLESYLDGPEVS) lines the ATP pocket. Mg(2+)-binding residues include glutamate 282 and asparagine 284.

Belongs to the GARS family. The cofactor is Mg(2+). It depends on Mn(2+) as a cofactor.

The enzyme catalyses 5-phospho-beta-D-ribosylamine + glycine + ATP = N(1)-(5-phospho-beta-D-ribosyl)glycinamide + ADP + phosphate + H(+). The protein operates within purine metabolism; IMP biosynthesis via de novo pathway; N(1)-(5-phospho-D-ribosyl)glycinamide from 5-phospho-alpha-D-ribose 1-diphosphate: step 2/2. The chain is Phosphoribosylamine--glycine ligase from Mycobacterium leprae (strain TN).